A 671-amino-acid chain; its full sequence is tRNA(Met) cytidine acetyltransferase TmcA (671 aa).

Residues glutamine 180, 202 to 211, and arginine 319 contribute to the ATP site; that span reads GRGKSALAGQ. The 176-residue stretch at 356–531 folds into the N-acetyltransferase domain; that stretch reads QTLWQSDPET…SGCYTAMALL (176 aa). Residues 461–463, 468–474, glutamate 499, and arginine 506 contribute to the acetyl-CoA site; these read IAV and QREGTGR.

Belongs to the RNA cytidine acetyltransferase family. TmcA subfamily.

Its subcellular location is the cytoplasm. It catalyses the reaction cytidine(34) in elongator tRNA(Met) + acetyl-CoA + ATP + H2O = N(4)-acetylcytidine(34) in elongator tRNA(Met) + ADP + phosphate + CoA + H(+). The enzyme catalyses 2-hydroxyisobutanoyl-CoA + L-lysyl-[protein] = N(6)-(2-hydroxyisobutanoyl)-L-lysyl-[protein] + CoA + H(+). ATP/GTP hydrolysis is stimulated by the addition of acetyl-CoA and tRNA(Met). Binding of acetyl-CoA to TmcA activates both ATPase and tRNA-binding activities. ATP promotes the 2-hydroxyisobutyryltransferase activity. Functionally, catalyzes the formation of N(4)-acetylcytidine (ac(4)C) at the wobble position of tRNA(Met), by using acetyl-CoA as an acetyl donor and ATP (or GTP). It recognizes the wobble base of tRNA(Met), thus distinguishing between tRNA(Met) and the structurally similar tRNA(Ile2). Could use an RNA helicase motor driven by ATP hydrolysis to deliver the wobble base of tRNA(Met) to the acetyltransferase domain of TmcA. Also functions as a lysine 2-hydroxyisobutyryltransferase to regulate transcription. Can specifically catalyze the 2-hydroxyisobutyrylation (Khib) of the DNA-binding protein H-NS. Hydroxyisobutyrylation of H-NS decreases its DNA-binding activity, promotes the expression of acid-resistance genes and enhances bacterial survival under extreme acid stress. The polypeptide is tRNA(Met) cytidine acetyltransferase TmcA (Escherichia coli (strain K12)).